Here is a 188-residue protein sequence, read N- to C-terminus: Protein CRIPTO3 (188 aa).

The EGF-like domain occupies 78-107 (LNRTCCLNGGTCMLESFCACPPSFYGRNCE). Asn79 carries N-linked (GlcNAc...) asparagine glycosylation. Cystine bridges form between Cys82–Cys89, Cys83–Cys95, Cys97–Cys106, Cys115–Cys133, Cys128–Cys149, and Cys131–Cys140.

Belongs to the EGF-CFC (Cripto-1/FRL1/Cryptic) family. In terms of tissue distribution, expressed weakly in lung, colon and breast. Expressed also strongly in primary cancer tissues; lung and colon cancers.

It is found in the cell membrane. Its function is as follows. Could play a role in the determination of the epiblastic cells that subsequently give rise to the mesoderm. Activates the Nodal-dependent signaling pathway. The sequence is that of Protein CRIPTO3 from Homo sapiens (Human).